We begin with the raw amino-acid sequence, 334 residues long: Ketol-acid reductoisomerase (NADP(+)) (334 aa).

One can recognise a KARI N-terminal Rossmann domain in the interval 2–182 (PKMYYEKDTD…GGARAGVLET (181 aa)). NADP(+)-binding positions include 25-28 (YGSQ), Ser51, Ser53, and 83-86 (DEKQ). Residue His108 is part of the active site. Gly134 contributes to the NADP(+) binding site. Positions 183–328 (TFKDETETDL…KELRGMMSWI (146 aa)) constitute a KARI C-terminal knotted domain. The Mg(2+) site is built by Asp191, Glu195, Glu227, and Glu231. Ser252 lines the substrate pocket.

Belongs to the ketol-acid reductoisomerase family. Mg(2+) serves as cofactor.

It catalyses the reaction (2R)-2,3-dihydroxy-3-methylbutanoate + NADP(+) = (2S)-2-acetolactate + NADPH + H(+). It carries out the reaction (2R,3R)-2,3-dihydroxy-3-methylpentanoate + NADP(+) = (S)-2-ethyl-2-hydroxy-3-oxobutanoate + NADPH + H(+). The protein operates within amino-acid biosynthesis; L-isoleucine biosynthesis; L-isoleucine from 2-oxobutanoate: step 2/4. It functions in the pathway amino-acid biosynthesis; L-valine biosynthesis; L-valine from pyruvate: step 2/4. Functionally, involved in the biosynthesis of branched-chain amino acids (BCAA). Catalyzes an alkyl-migration followed by a ketol-acid reduction of (S)-2-acetolactate (S2AL) to yield (R)-2,3-dihydroxy-isovalerate. In the isomerase reaction, S2AL is rearranged via a Mg-dependent methyl migration to produce 3-hydroxy-3-methyl-2-ketobutyrate (HMKB). In the reductase reaction, this 2-ketoacid undergoes a metal-dependent reduction by NADPH to yield (R)-2,3-dihydroxy-isovalerate. This chain is Ketol-acid reductoisomerase (NADP(+)), found in Clostridium beijerinckii (strain ATCC 51743 / NCIMB 8052) (Clostridium acetobutylicum).